A 785-amino-acid chain; its full sequence is Probable serine protease Ga0098714_109514 (785 aa).

Basic and acidic residues-rich tracts occupy residues 470-481 (LDHGKNGREGGR) and 491-501 (DGPEHPNHYAD). 2 disordered regions span residues 470–503 (LDHGKNGREGGRDVSAGPHGSDGPEHPNHYADID) and 608–629 (DGDASRTVTRHHPRTGEDEEVS).

The protein belongs to the peptidase S1 family.

Probably a dedicated protease for substrate gasdermin bGSDM; cleaves the bGSDM precursor, releasing the pore-forming moiety, which integrates into the membrane and triggers cell death. Involved in defense against bacteriophages. Expression of gasdermin bGSDM and this neighboring protease is toxic in E.coli on solid medium. This is Probable serine protease Ga0098714_109514 from Bradyrhizobium tropiciagri.